Consider the following 497-residue polypeptide: Cytochrome P450 71A14 (497 aa).

The chain crosses the membrane as a helical span at residues 3–23 (MIIISLCLATILALLLLKQFL). Cysteine 440 serves as a coordination point for heme.

The protein belongs to the cytochrome P450 family. The cofactor is heme.

The protein localises to the membrane. In Arabidopsis thaliana (Mouse-ear cress), this protein is Cytochrome P450 71A14 (CYP71A14).